A 379-amino-acid chain; its full sequence is Anhydro-N-acetylmuramic acid kinase (379 aa).

Position 9-16 (9-16 (GTSADGVD)) interacts with ATP.

It belongs to the anhydro-N-acetylmuramic acid kinase family.

It catalyses the reaction 1,6-anhydro-N-acetyl-beta-muramate + ATP + H2O = N-acetyl-D-muramate 6-phosphate + ADP + H(+). The protein operates within amino-sugar metabolism; 1,6-anhydro-N-acetylmuramate degradation. Its pathway is cell wall biogenesis; peptidoglycan recycling. Its function is as follows. Catalyzes the specific phosphorylation of 1,6-anhydro-N-acetylmuramic acid (anhMurNAc) with the simultaneous cleavage of the 1,6-anhydro ring, generating MurNAc-6-P. Is required for the utilization of anhMurNAc either imported from the medium or derived from its own cell wall murein, and thus plays a role in cell wall recycling. This chain is Anhydro-N-acetylmuramic acid kinase, found in Prochlorococcus marinus (strain MIT 9313).